Here is an 878-residue protein sequence, read N- to C-terminus: Phosphoenolpyruvate carboxylase (878 aa).

Active-site residues include H137 and K545.

It belongs to the PEPCase type 1 family. Mg(2+) serves as cofactor.

The catalysed reaction is oxaloacetate + phosphate = phosphoenolpyruvate + hydrogencarbonate. Functionally, forms oxaloacetate, a four-carbon dicarboxylic acid source for the tricarboxylic acid cycle. The polypeptide is Phosphoenolpyruvate carboxylase (Yersinia pseudotuberculosis serotype O:1b (strain IP 31758)).